Consider the following 164-residue polypeptide: Interferon gamma (164 aa).

The first 19 residues, 1-19 (MTCQTYNLFVLSVIMIYYG), serve as a signal peptide directing secretion. Asn42 and Asn61 each carry an N-linked (GlcNAc...) asparagine glycan.

This sequence belongs to the type II (or gamma) interferon family. Homodimer.

It localises to the secreted. Functionally, produced by lymphocytes activated by specific antigens or mitogens. IFN-gamma, in addition to having antiviral activity, has important immunoregulatory functions. It is a potent activator of macrophages, it has antiproliferative effects on transformed cells and it can potentiate the antiviral and antitumor effects of the type I interferons. This is Interferon gamma (IFNG) from Meleagris gallopavo (Wild turkey).